The sequence spans 197 residues: MIDSIVGIIQEVFSNYVILNYNNLYIKIFCNSTKFSEFLGKEKRVYVSLKFNENLSELECYGFLTREERELFLKLQKVTGVGSKLALQILSSIDFQELIVEIAKGNVAKLEKVKGIGKKTASRIILELKETLKKEFKVASTSGKEEKTYEKLEEISLALLSLGYDIDEVNQVLSSEDFSELSLEDGIKLALKKLSKI.

The segment at 1–64 (MIDSIVGIIQ…LSELECYGFL (64 aa)) is domain I. The interval 65–143 (TREERELFLK…KEFKVASTSG (79 aa)) is domain II. The interval 144-152 (KEEKTYEKL) is flexible linker. Residues 152–197 (LEEISLALLSLGYDIDEVNQVLSSEDFSELSLEDGIKLALKKLSKI) form a domain III region.

The protein belongs to the RuvA family. Homotetramer. Forms an RuvA(8)-RuvB(12)-Holliday junction (HJ) complex. HJ DNA is sandwiched between 2 RuvA tetramers; dsDNA enters through RuvA and exits via RuvB. An RuvB hexamer assembles on each DNA strand where it exits the tetramer. Each RuvB hexamer is contacted by two RuvA subunits (via domain III) on 2 adjacent RuvB subunits; this complex drives branch migration. In the full resolvosome a probable DNA-RuvA(4)-RuvB(12)-RuvC(2) complex forms which resolves the HJ.

It is found in the cytoplasm. Its function is as follows. The RuvA-RuvB-RuvC complex processes Holliday junction (HJ) DNA during genetic recombination and DNA repair, while the RuvA-RuvB complex plays an important role in the rescue of blocked DNA replication forks via replication fork reversal (RFR). RuvA specifically binds to HJ cruciform DNA, conferring on it an open structure. The RuvB hexamer acts as an ATP-dependent pump, pulling dsDNA into and through the RuvAB complex. HJ branch migration allows RuvC to scan DNA until it finds its consensus sequence, where it cleaves and resolves the cruciform DNA. The chain is Holliday junction branch migration complex subunit RuvA from Caldicellulosiruptor bescii (strain ATCC BAA-1888 / DSM 6725 / KCTC 15123 / Z-1320) (Anaerocellum thermophilum).